Here is a 164-residue protein sequence, read N- to C-terminus: Interferon gamma (164 aa).

The signal sequence occupies residues Met1 to Gly19. Residues Asn42, Asn61, and Asn95 are each glycosylated (N-linked (GlcNAc...) asparagine).

This sequence belongs to the type II (or gamma) interferon family. In terms of assembly, homodimer.

Its subcellular location is the secreted. Its function is as follows. Produced by lymphocytes activated by specific antigens or mitogens. IFN-gamma, in addition to having antiviral activity, has important immunoregulatory functions. It is a potent activator of macrophages, it has antiproliferative effects on transformed cells and it can potentiate the antiviral and antitumor effects of the type I interferons. This Anas platyrhynchos (Mallard) protein is Interferon gamma (IFNG).